A 266-amino-acid chain; its full sequence is Glucagon-1 (266 aa).

Residues 1–20 form the signal peptide; it reads MKSTCYMIGILLMILQNTYQ. Propeptides lie at residues 21–50, 84–95, 136–140, 175–178, 213–224, and 261–266; these read SPVP…LKEV, SGELSRRNADYE, NAEFE, IRYS, NFSEVHSVEEMD, and DLLEEQ. The span at 23–32 shows a compositional bias: polar residues; it reads VPETDANSRS. Positions 23–44 are disordered; it reads VPETDANSRSVKAARNEAVDDS.

It belongs to the glucagon family.

The protein localises to the secreted. In terms of biological role, promotes hydrolysis of glycogen and lipids, and raises the blood sugar level. This chain is Glucagon-1 (gcg1), found in Xenopus laevis (African clawed frog).